We begin with the raw amino-acid sequence, 802 residues long: Leucine--tRNA ligase (802 aa).

A 'HIGH' region motif is present at residues 40-51; it reads PYPSGAGLHVGH. Positions 576-580 match the 'KMSKS' region motif; sequence KMSKS. Lysine 579 is an ATP binding site.

This sequence belongs to the class-I aminoacyl-tRNA synthetase family.

The protein resides in the cytoplasm. It catalyses the reaction tRNA(Leu) + L-leucine + ATP = L-leucyl-tRNA(Leu) + AMP + diphosphate. The sequence is that of Leucine--tRNA ligase from Bacillus cytotoxicus (strain DSM 22905 / CIP 110041 / 391-98 / NVH 391-98).